Consider the following 174-residue polypeptide: Amino-acid acetyltransferase (174 aa).

The 139-residue stretch at 10 to 148 folds into the N-acetyltransferase domain; sequence PVVRRARTSD…VFDEMCRSYD (139 aa).

The protein belongs to the acetyltransferase family. In terms of assembly, homodimer and homotetramer.

It carries out the reaction L-glutamate + acetyl-CoA = N-acetyl-L-glutamate + CoA + H(+). The protein operates within amino-acid biosynthesis; L-arginine biosynthesis; N(2)-acetyl-L-ornithine from L-glutamate: step 1/4. With respect to regulation, inhibited by L-arginine. Catalyzes the conversion of L-glutamate to alpha-N-acetyl-L-glutamate. L-glutamine is a significantly better substrate compared to L-glutamate. In Mycobacterium tuberculosis (strain ATCC 25618 / H37Rv), this protein is Amino-acid acetyltransferase (argA).